A 374-amino-acid chain; its full sequence is Queuine tRNA-ribosyltransferase (374 aa).

Catalysis depends on Asp-89, which acts as the Proton acceptor. Substrate-binding positions include 89-93 (DSGGF), Asp-143, Gln-187, and Gly-214. The segment at 245-251 (GVGKPED) is RNA binding. Asp-264 acts as the Nucleophile in catalysis. An RNA binding; important for wobble base 34 recognition region spans residues 269-273 (TRNAR). Cys-302, Cys-304, Cys-307, and His-333 together coordinate Zn(2+).

This sequence belongs to the queuine tRNA-ribosyltransferase family. In terms of assembly, homodimer. Within each dimer, one monomer is responsible for RNA recognition and catalysis, while the other monomer binds to the replacement base PreQ1. Zn(2+) is required as a cofactor.

It catalyses the reaction 7-aminomethyl-7-carbaguanine + guanosine(34) in tRNA = 7-aminomethyl-7-carbaguanosine(34) in tRNA + guanine. The protein operates within tRNA modification; tRNA-queuosine biosynthesis. In terms of biological role, catalyzes the base-exchange of a guanine (G) residue with the queuine precursor 7-aminomethyl-7-deazaguanine (PreQ1) at position 34 (anticodon wobble position) in tRNAs with GU(N) anticodons (tRNA-Asp, -Asn, -His and -Tyr). Catalysis occurs through a double-displacement mechanism. The nucleophile active site attacks the C1' of nucleotide 34 to detach the guanine base from the RNA, forming a covalent enzyme-RNA intermediate. The proton acceptor active site deprotonates the incoming PreQ1, allowing a nucleophilic attack on the C1' of the ribose to form the product. After dissociation, two additional enzymatic reactions on the tRNA convert PreQ1 to queuine (Q), resulting in the hypermodified nucleoside queuosine (7-(((4,5-cis-dihydroxy-2-cyclopenten-1-yl)amino)methyl)-7-deazaguanosine). The protein is Queuine tRNA-ribosyltransferase of Serratia proteamaculans (strain 568).